A 418-amino-acid chain; its full sequence is Putative F-box protein At1g20795 (418 aa).

An F-box domain is found at 1–46; sequence METLGLPLPLFEKILFRLDPISLVMMKCTRRSFNSHISEDPYFKSK.

This Arabidopsis thaliana (Mouse-ear cress) protein is Putative F-box protein At1g20795.